Consider the following 605-residue polypeptide: Glutamine--fructose-6-phosphate aminotransferase [isomerizing] (605 aa).

Residue Cys-2 is the Nucleophile; for GATase activity of the active site. The Glutamine amidotransferase type-2 domain maps to 2 to 220 (CGIVGVTGKD…DGEIVVVKPD (219 aa)). SIS domains are found at residues 286 to 426 (LLTA…VDQP) and 458 to 595 (AKSA…VDKP). The active-site For Fru-6P isomerization activity is the Lys-600.

In terms of assembly, homodimer.

The protein resides in the cytoplasm. The catalysed reaction is D-fructose 6-phosphate + L-glutamine = D-glucosamine 6-phosphate + L-glutamate. Functionally, catalyzes the first step in hexosamine metabolism, converting fructose-6P into glucosamine-6P using glutamine as a nitrogen source. The polypeptide is Glutamine--fructose-6-phosphate aminotransferase [isomerizing] (Lactiplantibacillus plantarum (strain ATCC BAA-793 / NCIMB 8826 / WCFS1) (Lactobacillus plantarum)).